Consider the following 329-residue polypeptide: Ankyrin repeat and SOCS box protein 5 (329 aa).

ANK repeat units follow at residues 69-98, 102-131, 135-164, 167-196, 200-229, and 232-261; these read ADRSPLHEAASQGRLLALRTLLSQGYNVNA, DHVTPLHEACLGDHVACARTLLEAGANVNA, DGVTPLFNACSQGSPSCAELLLEYGAKAQL, CLPSPTHEAASKGHHECLDILISWGIDVDQ, HLGTPLYVACMSQQFHCIWKLLYAGADVQK, and YWDTPLHAAAQQSSTEIVNLLLEFGADINA. The SOCS box domain maps to 278 to 329; the sequence is MVERILLQHEATPSSLYQLCRLCIRSYIGKPRLHLIPQLQLPTLLKNFLQYR.

It belongs to the ankyrin SOCS box (ASB) family.

Its pathway is protein modification; protein ubiquitination. Functionally, may be a substrate-recognition component of a SCF-like ECS (Elongin-Cullin-SOCS-box protein) E3 ubiquitin-protein ligase complex which mediates the ubiquitination and subsequent proteasomal degradation of target proteins. May play a role in the initiation of arteriogenesis. In Homo sapiens (Human), this protein is Ankyrin repeat and SOCS box protein 5 (ASB5).